Here is a 412-residue protein sequence, read N- to C-terminus: Multifunctional CCA protein (412 aa).

Residues Gly-8 and Arg-11 each coordinate ATP. CTP is bound by residues Gly-8 and Arg-11. Residues Asp-21 and Asp-23 each contribute to the Mg(2+) site. ATP contacts are provided by Arg-91, Arg-137, and Arg-140. 3 residues coordinate CTP: Arg-91, Arg-137, and Arg-140. The HD domain occupies 228-329 (TGIHTLMTLS…VKLFDSIDAW (102 aa)).

This sequence belongs to the tRNA nucleotidyltransferase/poly(A) polymerase family. Bacterial CCA-adding enzyme type 1 subfamily. As to quaternary structure, monomer. Can also form homodimers and oligomers. Mg(2+) is required as a cofactor. It depends on Ni(2+) as a cofactor.

The enzyme catalyses a tRNA precursor + 2 CTP + ATP = a tRNA with a 3' CCA end + 3 diphosphate. It catalyses the reaction a tRNA with a 3' CCA end + 2 CTP + ATP = a tRNA with a 3' CCACCA end + 3 diphosphate. Catalyzes the addition and repair of the essential 3'-terminal CCA sequence in tRNAs without using a nucleic acid template. Adds these three nucleotides in the order of C, C, and A to the tRNA nucleotide-73, using CTP and ATP as substrates and producing inorganic pyrophosphate. tRNA 3'-terminal CCA addition is required both for tRNA processing and repair. Also involved in tRNA surveillance by mediating tandem CCA addition to generate a CCACCA at the 3' terminus of unstable tRNAs. While stable tRNAs receive only 3'-terminal CCA, unstable tRNAs are marked with CCACCA and rapidly degraded. The chain is Multifunctional CCA protein from Shigella sonnei (strain Ss046).